Consider the following 146-residue polypeptide: 3-dehydroquinate dehydratase (146 aa).

Tyrosine 23 (proton acceptor) is an active-site residue. Residues asparagine 74, histidine 80, and aspartate 87 each contribute to the substrate site. Histidine 100 functions as the Proton donor in the catalytic mechanism. Substrate contacts are provided by residues 101 to 102 (IS) and arginine 111.

It belongs to the type-II 3-dehydroquinase family. As to quaternary structure, homododecamer.

The enzyme catalyses 3-dehydroquinate = 3-dehydroshikimate + H2O. Its pathway is metabolic intermediate biosynthesis; chorismate biosynthesis; chorismate from D-erythrose 4-phosphate and phosphoenolpyruvate: step 3/7. Functionally, catalyzes a trans-dehydration via an enolate intermediate. This chain is 3-dehydroquinate dehydratase, found in Bacillus cereus (strain ATCC 14579 / DSM 31 / CCUG 7414 / JCM 2152 / NBRC 15305 / NCIMB 9373 / NCTC 2599 / NRRL B-3711).